A 420-amino-acid polypeptide reads, in one-letter code: 3-isopropylmalate dehydratase large subunit (420 aa).

Residues Cys-300, Cys-360, and Cys-363 each coordinate [4Fe-4S] cluster.

The protein belongs to the aconitase/IPM isomerase family. LeuC type 2 subfamily. Heterodimer of LeuC and LeuD. [4Fe-4S] cluster serves as cofactor.

The enzyme catalyses (2R,3S)-3-isopropylmalate = (2S)-2-isopropylmalate. It participates in amino-acid biosynthesis; L-leucine biosynthesis; L-leucine from 3-methyl-2-oxobutanoate: step 2/4. In terms of biological role, catalyzes the isomerization between 2-isopropylmalate and 3-isopropylmalate, via the formation of 2-isopropylmaleate. This is 3-isopropylmalate dehydratase large subunit from Syntrophus aciditrophicus (strain SB).